The sequence spans 432 residues: Probable exopolygalacturonase X (432 aa).

Residues 1–23 (MKFSYSFVQVVSLLLSLSPSVEG) form the signal peptide. N-linked (GlcNAc...) asparagine glycans are attached at residues N113, N129, and N199. One copy of the PbH1 1 repeat lies at 231–252 (SDNIVIQNSVINNGDDCVSFKP). D245 (proton donor) is an active-site residue. C247 and C264 form a disulfide bridge. N-linked (GlcNAc...) asparagine glycosylation is found at N253 and N265. PbH1 repeat units lie at residues 254–274 (STNI…SVGS), 285–306 (VQNV…RIKV), and 327–348 (VKNI…EVTQ). H268 is an active-site residue. N-linked (GlcNAc...) asparagine glycosylation is found at N292, N297, N329, N354, and N364. The stretch at 362–394 (PSNLTISDIHFKNFRGTTSGKRDPDVGTIVCSS) is one PbH1 5 repeat. C392 and C398 are joined by a disulfide.

It belongs to the glycosyl hydrolase 28 family.

It is found in the secreted. The catalysed reaction is [(1-&gt;4)-alpha-D-galacturonosyl](n) + H2O = alpha-D-galacturonate + [(1-&gt;4)-alpha-D-galacturonosyl](n-1). Its function is as follows. Specific in hydrolyzing the terminal glycosidic bond of polygalacturonic acid and oligogalacturonates. The chain is Probable exopolygalacturonase X (pgaX) from Neosartorya fischeri (strain ATCC 1020 / DSM 3700 / CBS 544.65 / FGSC A1164 / JCM 1740 / NRRL 181 / WB 181) (Aspergillus fischerianus).